The sequence spans 22 residues: Mu-conotoxin KIIIB (22 aa).

Positions 1-2 (KR) are excised as a propeptide. 7 cysteine pairs are disulfide-bonded: cysteine 5–cysteine 13, cysteine 5–cysteine 19, cysteine 5–cysteine 20, cysteine 6–cysteine 13, cysteine 6–cysteine 19, cysteine 8–cysteine 19, and cysteine 8–cysteine 20. Pharmacophore key residues stretches follow at residues 14-16 (RDH) and 18-19 (RC). The residue at position 20 (cysteine 20) is a Cysteine amide.

It belongs to the conotoxin M superfamily. Monomer. Toxins with three different disulfide connectivities have been synthesized. The conotoxin mu-KIIIA-P1 shows the connectivity C1-C5, C2-C4, and C3-C6, whereas mu-KIIIA-P2 shows the connectivity C1-C6, C2-C4, and C3-C5. The conotoxin mu-KIIIA-N has the 'native' fold of the mu-conotoxin family (C1-C4, C2-C5, and C3-C6). Mu-KIIIA-P1 and mu-KIIIA-P2 are obtained by both thermodynamic oxidative folding and regioselective synthesis. Mu-KIIIA-P1 is the major oxidative folding product. Mu-KIIIA-N is only obtained by regioselective synthesis. As to expression, expressed by the venom duct.

It is found in the secreted. In terms of biological role, mu-conotoxin KIIIA-P1: mu-conotoxins block voltage-gated sodium channels (Nav). This toxin potently blocks Nav1.2/SCN2A (IC(50)5-124 nM), Nav1.4/SCN4A (IC(50)=20-90 nM), and Nav1.7/SCN9A (IC(50)=290-413 nM). It moderately blocks Nav1.1/SCN1A, and mNav1.6/SCN8A. It also shows a very low activity on Nav1.3/SCN3A. This toxin binds a microsite within the pore different from the tetrodotoxin binding site 1 (tested on Nav1.2). The block is partial, with a residual current that can be completely blocked by TTX. The toxin probably docks at a more superficial site in the outer vestibule of the channel than does TTX. On rNav1.2/SCN2A, it produces a block that is only partially reversible. The block of Nav1.7 is modified when beta-subunits are coexpressed with the alpha subunit. Hence, blocks of channels containing beta-1 and beta-3 subunits are more potent (compared to channels without beta subunits), whereas blocks of channels containing beta-2 and beta-4 subunits are less potent (compared to channels without beta subunits). Its function is as follows. Mu-conotoxin KIIIA-P2: This toxin potently blocks Nav1.2/SCN2A (Kd=230 nM, IC(50)=1.37 uM) and Nav1.4/SCN4A (Kd=830 nM, IC(50)=2 uM). It also moderately blocks Nav1.7/SCN9A (Kd=1.57 uM, IC(50)=5.4 uM). In addition, this toxin may also inhibit other sodium channels, as does Mu-conotoxin KIIIA-P1. Functionally, mu-conotoxin KIIIA-N: This toxin moderately blocks Nav1.2/SCN2A (IC(50)=875 nM), Nav1.4/SCN4A (IC(50)=472 nM), and Nav1.7/SCN9A (IC(50)=887 nM). Mu-conotoxin KIIIB-P1: This toxin potently blocks Nav1.2/SCN2A (Kd=470 nM). In addition, this toxin may also inhibit other sodium channels, as does Mu-conotoxin KIIIA-P1. In terms of biological role, mu-conotoxin KIIIB-P2: This toxin potently blocks Nav1.2/SCN2A (Kd=26 nM). In addition, this toxin may also inhibit other sodium channels, as does Mu-conotoxin KIIIA-P1. The polypeptide is Mu-conotoxin KIIIB (Conus kinoshitai (Kinoshita's cone)).